Reading from the N-terminus, the 265-residue chain is Acetylglutamate kinase (265 aa).

Substrate is bound by residues 41-42, R63, and N156; that span reads GG.

The protein belongs to the acetylglutamate kinase family. ArgB subfamily.

The protein resides in the cytoplasm. It catalyses the reaction N-acetyl-L-glutamate + ATP = N-acetyl-L-glutamyl 5-phosphate + ADP. The protein operates within amino-acid biosynthesis; L-arginine biosynthesis; N(2)-acetyl-L-ornithine from L-glutamate: step 2/4. Catalyzes the ATP-dependent phosphorylation of N-acetyl-L-glutamate. This Brevibacillus brevis (strain 47 / JCM 6285 / NBRC 100599) protein is Acetylglutamate kinase.